The primary structure comprises 346 residues: MNINDFDFDLPEELIAQTPLEKRSESRLLILDPKTEELEDRHFYDIIDELEAGDALVLNNTRVLPARLHGERAETGGHIELLLLKDMGENRWETLAKPARKMKVGEEVVFGDGRLKAVVVEILEHGGRIVEFKYDGIFLEILESLGEMPLPPYIHEQLEDQERYQTVFAKENGSAAAPTAGLHYTPELLEKIADKGVKIVELTLHVGLGTFRPVSVDNVDEHHMHSEFYRLTEEAAAQLRAVKASGHKIFASGTTSIRTLETIGSKFDGDIQADSGWTDIFIKPGYEWKVVDAFNTNFHLPKSTLVMLVAAFAGRDFVLEAYQHAIDEKYRFFSFGDAMFVRSKNK.

It belongs to the QueA family. In terms of assembly, monomer.

Its subcellular location is the cytoplasm. It catalyses the reaction 7-aminomethyl-7-carbaguanosine(34) in tRNA + S-adenosyl-L-methionine = epoxyqueuosine(34) in tRNA + adenine + L-methionine + 2 H(+). The protein operates within tRNA modification; tRNA-queuosine biosynthesis. In terms of biological role, transfers and isomerizes the ribose moiety from AdoMet to the 7-aminomethyl group of 7-deazaguanine (preQ1-tRNA) to give epoxyqueuosine (oQ-tRNA). This chain is S-adenosylmethionine:tRNA ribosyltransferase-isomerase, found in Lactococcus lactis subsp. cremoris (strain MG1363).